A 1071-amino-acid polypeptide reads, in one-letter code: Kinesin-like protein KIN-14J (1071 aa).

The 104-residue stretch at 39–142 (KKGHQSLVEW…SLKALKASFS (104 aa)) folds into the Calponin-homology (CH) domain. Residues 157-181 (WSLPEDHSDSRGDDRNFTDGFQSKE) form a disordered region. The span at 158–173 (SLPEDHSDSRGDDRNF) shows a compositional bias: basic and acidic residues. Residues 299-389 (EKTRIEEKER…ELEKLCQSKS (91 aa)) adopt a coiled-coil conformation. The Kinesin motor domain maps to 472–800 (NIRVYCRIRP…LKFAERVSGV (329 aa)). ATP is bound at residue 556–563 (GQTGSGKT). Residues 811–844 (GRDVRQLMEQVSNLKDVIAKKDEELQNFQKVKGN) adopt a coiled-coil conformation. Disordered regions lie at residues 852 to 931 (GLSN…AAKG) and 995 to 1071 (ARMT…NRRR). 2 stretches are compositionally biased toward basic and acidic residues: residues 910 to 921 (SDERKHQKDYHQ) and 995 to 1017 (ARMT…KDRT). Residues 1034–1049 (TRPSRLSIATSSSSKA) are compositionally biased toward polar residues.

The protein belongs to the TRAFAC class myosin-kinesin ATPase superfamily. Kinesin family. KIN-14 subfamily.

In Arabidopsis thaliana (Mouse-ear cress), this protein is Kinesin-like protein KIN-14J.